The primary structure comprises 187 residues: Cell division protein SepF (187 aa).

This sequence belongs to the SepF family. In terms of assembly, homodimer. Interacts with FtsZ.

The protein localises to the cytoplasm. Functionally, cell division protein that is part of the divisome complex and is recruited early to the Z-ring. Probably stimulates Z-ring formation, perhaps through the cross-linking of FtsZ protofilaments. Its function overlaps with FtsA. This Streptococcus suis (strain 98HAH33) protein is Cell division protein SepF.